A 297-amino-acid chain; its full sequence is MGSLVREWVGFQQFPAATQEKLIEFFGKLKQKDMNSMTVLVLGKGGVGKSSTVNSLIGEQVVRVSPFQAEGLRPVMVSRTMGGFTINIIDTPGLVEAGYVNHQALELIKGFLVNRTIDVLLYVDRLDVYRVDELDKQVVIAITQTFGKEIWCKTLLVLTHAQFSPPDELSYETFSSKRSDSLLKTIRAGSKMRKQEFEDSAIAVVYAENSGRCSKNDKDEKALPNGEAWIPNLVKAITDVATNQRKAIHVDKKMVDGSYSDDKGKKLIPLIIGAQYLIVKMIQGAIRNDIKTSGKPL.

Positions 34 to 258 constitute an AIG1-type G domain; sequence MNSMTVLVLG…HVDKKMVDGS (225 aa). The chain crosses the membrane as a helical span at residues 37–53; the sequence is MTVLVLGKGGVGKSSTV. GTP-binding positions include 46–51 and 65–70; these read GVGKSS and SPFQAE. Residues Ser50 and Gln68 each coordinate Mg(2+). 2 homodimerization regions span residues 65–68 and 125–130; these read SPFQ and RLDVYR. Residue His160 coordinates GTP. Ser181 bears the Phosphoserine mark. 208–209 lines the GTP pocket; sequence EN.

The protein belongs to the TRAFAC class TrmE-Era-EngA-EngB-Septin-like GTPase superfamily. AIG1/Toc34/Toc159-like paraseptin GTPase family. TOC34 subfamily. Homodimer, heterodimer with TOC34 and TOC159, and monomer. The homodimerization and the dimerization with TOC159 require the binding of GTP on Arg-130, and a hypothetical coGAP factor. The dimeric form has a higher GTPase activity than the monomeric form. Part of the TOC core complex that includes 1 protein for the specific recognition of transit peptides surrounded by a ring composed of four proteins forming translocation channels, and four to five GTP-binding proteins providing energy. This core complex can interact with components of the TIC complex to form a larger import complex. Chloroplastic protein precursor such as prSS (precursor of the RuBisCO small subunit) interacts with these complexes. The TOC complex contains a specific subset of polar lipids such as digalactosyldiacylglyceride (DGDG), phosphatidylcholine (PC) and phosphatidylglycerol (PG). Interacts at least with TOC75-3. Forms large complexes including TOC33, pPORA and OEP161 during pPORA import into plastids at the plastid envelope membrane. Interacts with SP1. Mg(2+) is required as a cofactor. Post-translationally, phosphorylated by a kinase present in the outer envelope of chloroplast. When Ser-181 is phosphorylated, the binding to preprotein, GTP and GDP is inhibited, and thus, GTPase activity is repressed. Mostly expressed in seedlings and flowers, and, to a lower extent, in roots, stems, and leaves.

The protein localises to the plastid. The protein resides in the chloroplast outer membrane. In terms of biological role, GTPase involved in protein precursor import into chloroplasts. Seems to recognize chloroplast-destined precursor proteins and regulate their presentation to the translocation channel through GTP hydrolysis. Binds GTP, GDP, XTP, but not ATP. Probably specialized in the import of nuclear encoded photosynthetic preproteins from the cytoplasm to the chloroplast, especially during early development stages. The sequence is that of Translocase of chloroplast 33, chloroplastic (TOC33) from Arabidopsis thaliana (Mouse-ear cress).